Reading from the N-terminus, the 2304-residue chain is Protein Ycf2 (2304 aa).

1637–1644 (GSIGTGRS) is an ATP binding site.

Belongs to the Ycf2 family.

Its subcellular location is the plastid. The protein resides in the chloroplast stroma. Its function is as follows. Probable ATPase of unknown function. Its presence in a non-photosynthetic plant (Epifagus virginiana) and experiments in tobacco indicate that it has an essential function which is probably not related to photosynthesis. This is Protein Ycf2 from Amborella trichopoda.